The chain runs to 261 residues: Cytochrome c oxidase subunit 3 (261 aa).

The Mitochondrial matrix portion of the chain corresponds to 1–15 (MTHQTHAYHMVDPSP). Residues 16–34 (WPLTGALSALLMTSGLTMW) traverse the membrane as a helical segment. Topologically, residues 35 to 40 (FHYHSV) are mitochondrial intermembrane. The helical transmembrane segment at 41–66 (VLLFLGLMTNTLTMFQWWRDVVREGT) threads the bilayer. Residues 67 to 72 (FQGHHT) lie on the Mitochondrial matrix side of the membrane. A helical membrane pass occupies residues 73-105 (PVVQEGLRYGMILFITSEVLFFTGFFWAFYHSS). Over 106–128 (LAPTPELGSYWPPVGVYPLNPLE) the chain is Mitochondrial intermembrane. A helical membrane pass occupies residues 129 to 152 (VPLLNTSVLLASGVTITWAHHSLM). At 153 to 155 (EGN) the chain is on the mitochondrial matrix side. The helical transmembrane segment at 156-183 (RKNMLQALLITILLGVYFTLLQMFEYYE) threads the bilayer. At 184–190 (ASFTISD) the chain is on the mitochondrial intermembrane side. A helical membrane pass occupies residues 191 to 223 (GIYGSTFFVTTGFHGLHVIIGSTFLLTCFIRQL). The Mitochondrial matrix portion of the chain corresponds to 224 to 232 (KFHFTSNHH). A helical membrane pass occupies residues 233–256 (FGFEAAAWYWHFVDVVWLFLYLSI). Residues 257–261 (YWWGS) lie on the Mitochondrial intermembrane side of the membrane.

It belongs to the cytochrome c oxidase subunit 3 family. In terms of assembly, component of the cytochrome c oxidase (complex IV, CIV), a multisubunit enzyme composed of 14 subunits. The complex is composed of a catalytic core of 3 subunits MT-CO1, MT-CO2 and MT-CO3, encoded in the mitochondrial DNA, and 11 supernumerary subunits COX4I, COX5A, COX5B, COX6A, COX6B, COX6C, COX7A, COX7B, COX7C, COX8 and NDUFA4, which are encoded in the nuclear genome. The complex exists as a monomer or a dimer and forms supercomplexes (SCs) in the inner mitochondrial membrane with NADH-ubiquinone oxidoreductase (complex I, CI) and ubiquinol-cytochrome c oxidoreductase (cytochrome b-c1 complex, complex III, CIII), resulting in different assemblies (supercomplex SCI(1)III(2)IV(1) and megacomplex MCI(2)III(2)IV(2)).

The protein resides in the mitochondrion inner membrane. The catalysed reaction is 4 Fe(II)-[cytochrome c] + O2 + 8 H(+)(in) = 4 Fe(III)-[cytochrome c] + 2 H2O + 4 H(+)(out). Its function is as follows. Component of the cytochrome c oxidase, the last enzyme in the mitochondrial electron transport chain which drives oxidative phosphorylation. The respiratory chain contains 3 multisubunit complexes succinate dehydrogenase (complex II, CII), ubiquinol-cytochrome c oxidoreductase (cytochrome b-c1 complex, complex III, CIII) and cytochrome c oxidase (complex IV, CIV), that cooperate to transfer electrons derived from NADH and succinate to molecular oxygen, creating an electrochemical gradient over the inner membrane that drives transmembrane transport and the ATP synthase. Cytochrome c oxidase is the component of the respiratory chain that catalyzes the reduction of oxygen to water. Electrons originating from reduced cytochrome c in the intermembrane space (IMS) are transferred via the dinuclear copper A center (CU(A)) of subunit 2 and heme A of subunit 1 to the active site in subunit 1, a binuclear center (BNC) formed by heme A3 and copper B (CU(B)). The BNC reduces molecular oxygen to 2 water molecules using 4 electrons from cytochrome c in the IMS and 4 protons from the mitochondrial matrix. The polypeptide is Cytochrome c oxidase subunit 3 (MT-CO3) (Mammuthus primigenius (Siberian woolly mammoth)).